The chain runs to 267 residues: Chlorophyll a-b binding protein 3B, chloroplastic (267 aa).

The transit peptide at 1 to 34 (MAASTMALSSSTFAGKAVKLSPSSSEISGNGRIT) directs the protein to the chloroplast. Residues 19-52 (KLSPSSSEISGNGRITMRKTAAKPKPASSGSPWX) are disordered. Residues 153-173 (LVHAQSILAIWACQVVLMGAV) form a helical membrane-spanning segment. 6 residues coordinate chlorophyll b: Val154, Ser158, Gln166, Glu174, Arg177, and Leu183. The chlorophyll a site is built by Lys214, Glu215, Asn218, Arg220, Gln232, His247, and Ala256. The chain crosses the membrane as a helical span at residues 221–241 (LAMFSMFGFFVQAIVTGKGPL). Residue Phe263 participates in chlorophyll b binding.

Belongs to the light-harvesting chlorophyll a/b-binding (LHC) protein family. As to quaternary structure, the LHC complex consists of chlorophyll a-b binding proteins. Binds at least 14 chlorophylls (8 Chl-a and 6 Chl-b) and carotenoids such as lutein and neoxanthin. is required as a cofactor. Post-translationally, photoregulated by reversible phosphorylation of its threonine residues.

It localises to the plastid. Its subcellular location is the chloroplast thylakoid membrane. In terms of biological role, the light-harvesting complex (LHC) functions as a light receptor, it captures and delivers excitation energy to photosystems with which it is closely associated. The sequence is that of Chlorophyll a-b binding protein 3B, chloroplastic (CAB3B) from Solanum lycopersicum (Tomato).